The following is a 905-amino-acid chain: Chitin synthase 3B (905 aa).

The segment covering 1-10 has biased composition (basic and acidic residues); sequence MAYNGRDQEY. Positions 1–136 are disordered; it reads MAYNGRDQEY…GGGGGLGRSK (136 aa). Residues 81–93 show a composition bias toward gly residues; it reads GPTGYGDTGGSFG. N536 carries N-linked (GlcNAc...) asparagine glycosylation. The helical transmembrane segment at 562 to 584 threads the bilayer; the sequence is MFFLHIQLIYTTLNTMFAWFSLG. N601 carries an N-linked (GlcNAc...) asparagine glycan. 6 consecutive transmembrane segments (helical) span residues 618–638, 653–673, 705–725, 733–753, 832–852, and 873–893; these read IVNA…FILA, SFMV…YLVV, VILV…FMYL, SFPY…VYAF, TGLV…ITST, and FLLY…LWFL.

The protein belongs to the chitin synthase family. Class III subfamily.

It is found in the cell membrane. It catalyses the reaction [(1-&gt;4)-N-acetyl-beta-D-glucosaminyl](n) + UDP-N-acetyl-alpha-D-glucosamine = [(1-&gt;4)-N-acetyl-beta-D-glucosaminyl](n+1) + UDP + H(+). Functionally, polymerizes chitin, a structural polymer of the cell wall and septum, by transferring the sugar moiety of UDP-GlcNAc to the non-reducing end of the growing chitin polymer. Plays essential functions in fungal survival and host infection. The polypeptide is Chitin synthase 3B (Gibberella zeae (strain ATCC MYA-4620 / CBS 123657 / FGSC 9075 / NRRL 31084 / PH-1) (Wheat head blight fungus)).